Reading from the N-terminus, the 646-residue chain is Type I inositol polyphosphate 5-phosphatase 2 (646 aa).

Positions threonine 59–histidine 74 are enriched in basic and acidic residues. Disordered stretches follow at residues threonine 59 to glutamate 99, glutamate 185 to serine 207, and isoleucine 329 to serine 369. Polar residues predominate over residues tyrosine 188–serine 207. The segment covering glutamate 341–serine 350 has biased composition (basic and acidic residues). Catalytic regions lie at residues aspartate 495–serine 510 and lysine 575–lysine 590.

It belongs to the inositol polyphosphate 5-phosphatase family. In terms of tissue distribution, expressed ubiquitously.

The enzyme catalyses 1D-myo-inositol 1,4,5-trisphosphate + H2O = 1D-myo-inositol 1,4-bisphosphate + phosphate. It catalyses the reaction 1D-myo-inositol 1,3,4,5-tetrakisphosphate + H2O = 1D-myo-inositol 1,3,4-trisphosphate + phosphate. In terms of biological role, has phosphatase activity toward Ins(1,4,5)P3 and Ins(1,3,4,5)P4. Seems to be involved in the abscisic acid (ABA) signaling pathway. Could also be able to hydrolyze PtdIns(4,5)P2 and PtdIns(3,4,5)P3. In Arabidopsis thaliana (Mouse-ear cress), this protein is Type I inositol polyphosphate 5-phosphatase 2.